Consider the following 506-residue polypeptide: tRNA (guanine(6)-N(2))-methyltransferase THUMP3 (506 aa).

Residues 144–172 (KTKRRKLNPNSSKQKIDNGRGDTTVEKDV) form a disordered region. The span at 157–172 (QKIDNGRGDTTVEKDV) shows a compositional bias: basic and acidic residues. Positions 170 to 286 (KDVKKELTNS…DNEVVVGIAL (117 aa)) constitute a THUMP domain.

The protein belongs to the methyltransferase superfamily. Part of the heterodimeric THUMPD3-TRM112 methyltransferase complex; this complex forms an active tRNA methyltransferase, where TRMT112 acts as an activator of the catalytic subunit THUMPD3.

The protein localises to the cytoplasm. The catalysed reaction is guanosine(6) in tRNA + S-adenosyl-L-methionine = N(2)-methylguanosine(6) in tRNA + S-adenosyl-L-homocysteine + H(+). The enzyme catalyses guanosine(7) in tRNA + S-adenosyl-L-methionine = N(2)-methylguanosine(7) in tRNA + S-adenosyl-L-homocysteine + H(+). Functionally, catalytic subunit of the THUMPD3-TRM112 methyltransferase complex, that specifically mediates the S-adenosyl-L-methionine-dependent N(2)-methylation of guanosine nucleotide at position 6 (m2G6) in tRNAs. This is one of the major tRNA (guanine-N(2))-methyltransferases. Also catalyzes the S-adenosyl-L-methionine-dependent N(2)-methylation of guanosine nucleotide at position 7 of tRNA(Trp). The polypeptide is tRNA (guanine(6)-N(2))-methyltransferase THUMP3 (Bos taurus (Bovine)).